The sequence spans 512 residues: 2,3-bisphosphoglycerate-independent phosphoglycerate mutase (512 aa).

Mn(2+) is bound by residues aspartate 12 and serine 62. Catalysis depends on serine 62, which acts as the Phosphoserine intermediate. Substrate contacts are provided by residues histidine 123, 154–155, arginine 181, arginine 187, 253–256, and lysine 336; these read RD and RPDR. The Mn(2+) site is built by aspartate 403, histidine 407, aspartate 444, histidine 445, and histidine 462.

Belongs to the BPG-independent phosphoglycerate mutase family. In terms of assembly, monomer. The cofactor is Mn(2+).

The catalysed reaction is (2R)-2-phosphoglycerate = (2R)-3-phosphoglycerate. It functions in the pathway carbohydrate degradation; glycolysis; pyruvate from D-glyceraldehyde 3-phosphate: step 3/5. Its function is as follows. Catalyzes the interconversion of 2-phosphoglycerate and 3-phosphoglycerate. The sequence is that of 2,3-bisphosphoglycerate-independent phosphoglycerate mutase from Onion yellows phytoplasma (strain OY-M).